The primary structure comprises 221 residues: Transcription antitermination protein NusB (221 aa).

The protein belongs to the NusB family.

Its function is as follows. Involved in transcription antitermination. Required for transcription of ribosomal RNA (rRNA) genes. Binds specifically to the boxA antiterminator sequence of the ribosomal RNA (rrn) operons. The sequence is that of Transcription antitermination protein NusB from Synechocystis sp. (strain ATCC 27184 / PCC 6803 / Kazusa).